The primary structure comprises 583 residues: MPRGLELLIAQTILQGFDAQYGRFLEVTSGAQQRFEQADWHAVQQAMKSRIHLYDHHVGLVVEQLRCITDGKSTDADFLLRVKEHYTRLLPDYPRFEIAESFFNSVYCRLFDHRSLTPERLFIFSSQPERRFRTIPRPLAKDFFPDHGWEPLLMRILSDLPLRLPWQNKSRDIRYIIAHLTETLGEDALPRCHVQVANELFYRNKAAWLVGKLTTPDGTLPFLLPIHRTDEGELFVDTCLTTTAEASIVFGFARSYFMVYAPLPAALVEWLREILPGKTTAELYMAIGCQKHAKTESYREYLCYLAESDEKFIEAPGIRGMVMLVFTLPGFDRVFKIIKDKFAPQKEMSAAHVRACYQLVKEHDRVGRMADTQEFENFVLDKRQIDPALMALLRQEAPEKITDLGEHIVIRHLYIERRMVPLNIWLEQVEGQQLRDAIEEYGNAIRQLAAANIFPGDMLFKNFGVTRHGRVVFYDYDEICYMTEVNFRDIPPARYPEDELASEPWYSVSPGDVFPEEFRHWLCADPRIGPLFEEMHADLFRADYWRALQTRIKEGHVEDVYAYRRRQRFSVRYGAISSTANSS.

Residues 315–321 and Lys336 contribute to the ATP site; that span reads APGIRGM. Asp371 is an active-site residue.

This sequence belongs to the AceK family.

Its subcellular location is the cytoplasm. It carries out the reaction L-seryl-[isocitrate dehydrogenase] + ATP = O-phospho-L-seryl-[isocitrate dehydrogenase] + ADP + H(+). Bifunctional enzyme which can phosphorylate or dephosphorylate isocitrate dehydrogenase (IDH) on a specific serine residue. This is a regulatory mechanism which enables bacteria to bypass the Krebs cycle via the glyoxylate shunt in response to the source of carbon. When bacteria are grown on glucose, IDH is fully active and unphosphorylated, but when grown on acetate or ethanol, the activity of IDH declines drastically concomitant with its phosphorylation. The chain is Isocitrate dehydrogenase kinase/phosphatase from Salmonella agona (strain SL483).